A 232-amino-acid polypeptide reads, in one-letter code: Lipoprotein-releasing system ATP-binding protein LolD (232 aa).

One can recognise an ABC transporter domain in the interval 11-231; it reads VYLHDIKRQY…SIEDGVIVEL (221 aa). ATP is bound at residue 47–54; that stretch reads APSGSGKS.

This sequence belongs to the ABC transporter superfamily. Lipoprotein translocase (TC 3.A.1.125) family. The complex is composed of two ATP-binding proteins (LolD) and two transmembrane proteins (LolC and LolE).

Its subcellular location is the cell inner membrane. Part of the ABC transporter complex LolCDE involved in the translocation of mature outer membrane-directed lipoproteins, from the inner membrane to the periplasmic chaperone, LolA. Responsible for the formation of the LolA-lipoprotein complex in an ATP-dependent manner. The chain is Lipoprotein-releasing system ATP-binding protein LolD from Rhodopseudomonas palustris (strain BisB5).